The sequence spans 388 residues: Dual specificity mitogen-activated protein kinase kinase 1 (388 aa).

Residues 1-20 (PIQLNPAPDGSAVNGTSSAE) form a disordered region. Residues 61–356 (FEKISELGAG…LKQLMIHAFI (296 aa)) form the Protein kinase domain. ATP-binding positions include 67 to 75 (LGAGNGGVV) and K90. The active-site Proton acceptor is the D183. Phosphoserine; by RAF is present on residues S211 and S215. Residues 275-299 (DSPVTETSPRQRAPGRPMSSYGSDS) form a disordered region.

It belongs to the protein kinase superfamily. STE Ser/Thr protein kinase family. MAP kinase kinase subfamily. Post-translationally, MAPKK is itself dependent on Ser/Thr phosphorylation for activity catalyzed by MAP kinase kinase kinases (RAF or MEKK1).

Its subcellular location is the cytoplasm. It is found in the cytoskeleton. It localises to the microtubule organizing center. The protein resides in the centrosome. The protein localises to the spindle pole body. Its subcellular location is the nucleus. The enzyme catalyses L-seryl-[protein] + ATP = O-phospho-L-seryl-[protein] + ADP + H(+). It catalyses the reaction L-threonyl-[protein] + ATP = O-phospho-L-threonyl-[protein] + ADP + H(+). It carries out the reaction L-tyrosyl-[protein] + ATP = O-phospho-L-tyrosyl-[protein] + ADP + H(+). Functionally, dual specificity protein kinase which acts as an essential component of the MAP kinase signal transduction pathway. Binding of extracellular ligands such as growth factors, cytokines and hormones to their cell-surface receptors activates RAS and this initiates RAF1 activation. RAF1 then further activates the dual-specificity protein kinases MAP2K1/MEK1 and MAP2K2/MEK2. Both MAP2K1/MEK1 and MAP2K2/MEK2 function specifically in the MAPK/ERK cascade, and catalyze the concomitant phosphorylation of a threonine and a tyrosine residue in a Thr-Glu-Tyr sequence located in the extracellular signal-regulated kinases MAPK3/ERK1 and MAPK1/ERK2, leading to their activation and further transduction of the signal within the MAPK/ERK cascade. Depending on the cellular context, this pathway mediates diverse biological functions such as cell growth, adhesion, survival and differentiation predominantly through the regulation of transcription, metabolism and cytoskeletal rearrangements. The polypeptide is Dual specificity mitogen-activated protein kinase kinase 1 (MAP2K1) (Serinus canaria (Island canary)).